Reading from the N-terminus, the 247-residue chain is Leucyl/phenylalanyl-tRNA--protein transferase (247 aa).

It belongs to the L/F-transferase family.

Its subcellular location is the cytoplasm. It carries out the reaction N-terminal L-lysyl-[protein] + L-leucyl-tRNA(Leu) = N-terminal L-leucyl-L-lysyl-[protein] + tRNA(Leu) + H(+). The catalysed reaction is N-terminal L-arginyl-[protein] + L-leucyl-tRNA(Leu) = N-terminal L-leucyl-L-arginyl-[protein] + tRNA(Leu) + H(+). The enzyme catalyses L-phenylalanyl-tRNA(Phe) + an N-terminal L-alpha-aminoacyl-[protein] = an N-terminal L-phenylalanyl-L-alpha-aminoacyl-[protein] + tRNA(Phe). Functionally, functions in the N-end rule pathway of protein degradation where it conjugates Leu, Phe and, less efficiently, Met from aminoacyl-tRNAs to the N-termini of proteins containing an N-terminal arginine or lysine. This is Leucyl/phenylalanyl-tRNA--protein transferase from Solidesulfovibrio magneticus (strain ATCC 700980 / DSM 13731 / RS-1) (Desulfovibrio magneticus).